The primary structure comprises 83 residues: Hainantoxin-III 8 (83 aa).

An N-terminal signal peptide occupies residues 1–21 (MKASMFLALAGLVLLFVVGYA). The propeptide occupies 22-48 (SESEEKEFPRELLSKIFAVDDFTGEER). 3 disulfide bridges follow: Cys50–Cys65, Cys57–Cys70, and Cys64–Cys77. At Leu81 the chain carries Leucine amide.

The protein belongs to the neurotoxin 10 (Hwtx-1) family. 15 (Hntx-3) subfamily. As to quaternary structure, monomer. As to expression, expressed by the venom gland.

It localises to the secreted. Its function is as follows. Selective antagonist of neuronal tetrodotoxin (TTX)-sensitive voltage-gated sodium channels (IC(50)=1270 nM on Nav1.1/SCN1A, 270 nM on Nav1.2/SCN2A, 491 nM on Nav1.3/SCN3A and 232 nM on Nav1.7/SCN9A). This toxin suppress Nav1.7 current amplitude without significantly altering the activation, inactivation, and repriming kinetics. Short extreme depolarizations partially activate the toxin-bound channel, indicating voltage-dependent inhibition of this toxin. This toxin increases the deactivation of the Nav1.7 current after extreme depolarizations. The toxin-Nav1.7 complex is gradually dissociated upon prolonged strong depolarizations in a voltage-dependent manner, and the unbound toxin rebinds to Nav1.7 after a long repolarization. Moreover, analysis of chimeric channels showed that the DIIS3-S4 linker is critical for toxin binding to Nav1.7. These data are consistent with this toxin interacting with Nav1.7 site 4 and trapping the domain II voltage sensor in the closed state. This is Hainantoxin-III 8 from Cyriopagopus hainanus (Chinese bird spider).